Consider the following 332-residue polypeptide: uncharacterized protein (332 aa).

This is an uncharacterized protein from Schizosaccharomyces pombe (strain 972 / ATCC 24843) (Fission yeast).